A 185-amino-acid polypeptide reads, in one-letter code: ATP synthase subunit b, cyanelle (185 aa).

Residues 36 to 58 (LINLLVIFFLLIYQGRPFFTALL) form a helical membrane-spanning segment.

This sequence belongs to the ATPase B chain family. In terms of assembly, F-type ATPases have 2 components, F(1) - the catalytic core - and F(0) - the membrane proton channel. F(1) has five subunits: alpha(3), beta(3), gamma(1), delta(1), epsilon(1). F(0) has four main subunits: a(1), b(1), b'(1) and c(10-14). The alpha and beta chains form an alternating ring which encloses part of the gamma chain. F(1) is attached to F(0) by a central stalk formed by the gamma and epsilon chains, while a peripheral stalk is formed by the delta, b and b' chains.

It is found in the plastid. It localises to the cyanelle thylakoid membrane. In terms of biological role, f(1)F(0) ATP synthase produces ATP from ADP in the presence of a proton or sodium gradient. F-type ATPases consist of two structural domains, F(1) containing the extramembraneous catalytic core and F(0) containing the membrane proton channel, linked together by a central stalk and a peripheral stalk. During catalysis, ATP synthesis in the catalytic domain of F(1) is coupled via a rotary mechanism of the central stalk subunits to proton translocation. Component of the F(0) channel, it forms part of the peripheral stalk, linking F(1) to F(0). The protein is ATP synthase subunit b, cyanelle of Cyanophora paradoxa.